A 349-amino-acid chain; its full sequence is Homoserine O-succinyltransferase (349 aa).

The active-site Acyl-thioester intermediate is the Cys146. Substrate contacts are provided by Lys167 and Ser196. His239 (proton acceptor) is an active-site residue. Residue Glu241 is part of the active site. Residue Arg253 participates in substrate binding.

It belongs to the MetA family.

It localises to the cytoplasm. It catalyses the reaction L-homoserine + succinyl-CoA = O-succinyl-L-homoserine + CoA. Its pathway is amino-acid biosynthesis; L-methionine biosynthesis via de novo pathway; O-succinyl-L-homoserine from L-homoserine: step 1/1. Its function is as follows. Transfers a succinyl group from succinyl-CoA to L-homoserine, forming succinyl-L-homoserine. In vitro, can also use glutaryl-CoA as acyl donor. The protein is Homoserine O-succinyltransferase of Thiobacillus denitrificans (strain ATCC 25259 / T1).